The primary structure comprises 204 residues: Guanylate kinase (204 aa).

In terms of domain architecture, Guanylate kinase-like spans 18–198 (GKLIIFSAPS…AKAETLEVIK (181 aa)). 25-32 (APSGSGKS) provides a ligand contact to ATP.

Belongs to the guanylate kinase family.

The protein resides in the cytoplasm. It carries out the reaction GMP + ATP = GDP + ADP. Its function is as follows. Essential for recycling GMP and indirectly, cGMP. This chain is Guanylate kinase, found in Bacteroides thetaiotaomicron (strain ATCC 29148 / DSM 2079 / JCM 5827 / CCUG 10774 / NCTC 10582 / VPI-5482 / E50).